The chain runs to 428 residues: Cytochrome c biogenesis protein CcsB (428 aa).

The next 3 helical transmembrane spans lie at 14-34, 72-92, and 162-182; these read LRFA…GTFI, SNWF…CSFR, and LGPI…AYGN.

The protein belongs to the Ccs1/CcsB family. As to quaternary structure, may interact with CcsA.

Its subcellular location is the cellular thylakoid membrane. Functionally, required during biogenesis of c-type cytochromes (cytochrome c6 and cytochrome f) at the step of heme attachment. The polypeptide is Cytochrome c biogenesis protein CcsB (Prochlorococcus marinus subsp. pastoris (strain CCMP1986 / NIES-2087 / MED4)).